The primary structure comprises 466 residues: GATA-binding factor 2 (466 aa).

2 stretches are compositionally biased toward low complexity: residues 139–155 (GSSTSSTASVSSLTPAS) and 174–188 (PDPNSTSAASPSSSA). The segment at 139 to 196 (GSSTSSTASVSSLTPASHSGSHLFGFPPTPPKEVSPDPNSTSAASPSSSAGARQEDKD) is disordered. 2 consecutive GATA-type zinc fingers follow at residues 281–305 (CVNCGATATPLWRRDGTGHYLCNAC) and 335–359 (CANCQTTTTTLWRRNANGDPVCNAC). Residues 436 to 466 (GHILPTPTPIHPSSSISFGHPHPSSMVTAMG) are disordered.

As to expression, expressed in all developmental stages of erythroid cells but is additionally found in a limited subset of other tissues.

It is found in the nucleus. Its function is as follows. Transcriptional activator which probably serves as a general switch factor for cell-specific development. It binds to DNA sites with the consensus sequence 5'-[AT]GATA[AG]-3' within regulatory regions of genes. The sequence is that of GATA-binding factor 2 (GATA2) from Gallus gallus (Chicken).